The primary structure comprises 162 residues: UPF0305 protein MmarC6_0221 (162 aa).

The protein belongs to the UPF0305 family.

The sequence is that of UPF0305 protein MmarC6_0221 from Methanococcus maripaludis (strain C6 / ATCC BAA-1332).